The chain runs to 138 residues: Basic phospholipase A2 ammodytoxin C (138 aa).

Residues Met1–Gly16 form the signal peptide. Cystine bridges form between Cys42–Cys131, Cys44–Cys60, Cys59–Cys111, Cys65–Cys138, Cys66–Cys104, Cys73–Cys97, and Cys91–Cys102. Ca(2+) is bound by residues Tyr43, Gly45, and Gly47. His63 is an active-site residue. Position 64 (Asp64) interacts with Ca(2+). Asp105 is an active-site residue.

This sequence belongs to the phospholipase A2 family. Group II subfamily. D49 sub-subfamily. Monomer. Binds to calmodulin, coagulation factor X (F10), 14-3-3 proteins gamma (YWHAG) and epsilon (YWHAE), and R25, a mitochondrial membrane protein. May bind to M-type PLA2 receptor (R-180). It depends on Ca(2+) as a cofactor. Expressed by the venom gland.

It is found in the secreted. The protein resides in the host cytoplasm. The protein localises to the host cytosol. It carries out the reaction a 1,2-diacyl-sn-glycero-3-phosphocholine + H2O = a 1-acyl-sn-glycero-3-phosphocholine + a fatty acid + H(+). Its function is as follows. Snake venom phospholipase A2 (PLA2) that acts as a presynaptic neurotoxin, an inhibitor of blood coagulation, and has been found to bind with high affinity to intracellular proteins. The response of indirectly stimulated neuromuscular preparations to ammodytoxin (Atx) is triphasic. The first phase, the transient inhibition of the acetylcholine (ACh) release, starts soon after the addition of Atx and lasts for several minutes. This phase is probably independent of Atx enzymatic activity. The effect may be due to the specific binding of the toxin to presynaptic receptors. These receptors, called N-type receptors, are still unidentified. It is noteworthy that a neuronal isoform of the M-type PLA2 receptor (R180) has been identified as a high-affinity receptor for Atx in neuronal plasma membranes. It was demonstrated however that this receptor is not essential for expression of neurotoxicity by Atx. The second phase corresponds to an augmentation of neurotransmitter release. A peak is reached 10-20 minutes after exposure of the preparation to Atx and is followed by a gradual reduction. In this phase, the enzymatic activity of Atx of the mammalian is not significant. It is speculated that the increased release of neurotransmitter in this phase is induced by the interference of Atx with voltage-gated potassium channels. Measurements of ionic showed however that voltage-gated potassium channels are not affected by Atx. The third phase of the response of neuromuscular preparations to Atx, which corresponds to a complete and irreversible paralysis, is clearly dependent on the hydrolytic activity of the toxin. In addition to its presynaptic neurotoxicity, Atx shows an anticoagulant activity by binding with high affinity to activated coagulation factor X (F10) thus inhibiting the formation of the prothrombinase complex (FX/FV) and its activity (IC(50) is 240 nM). Surprisingly, Atx was discovered to bind intracellular proteins such as calmodulin (CaM), 14-3-3 proteins gamma (YWHAG) and epsilon (YWHAE), as well as R25, a mitochondrial integral membrane protein found in cerebral cortex. These findings raised a doubt about the dogma of the exclusively extracellular action of PLA2s, defended by the potential instability of these molecules in the reducing environment of the eukaryotic cytosol coupled with their possible inability to act as enzymes in this cellular compartment, due to too low concentration of calcium ions. This hypothesis was challenged efficiently by demonstrating the internalization of AtxA into a culture cells, but still remains to be directly demonstrated in vivo. PLA2 catalyzes the calcium-dependent hydrolysis of the 2-acyl groups in 3-sn-phosphoglycerides. This Vipera ammodytes ammodytes (Western sand viper) protein is Basic phospholipase A2 ammodytoxin C.